The primary structure comprises 386 residues: 1-deoxy-D-xylulose 5-phosphate reductoisomerase (386 aa).

T10, G11, S12, I13, G36, N38, and N122 together coordinate NADPH. K123 contributes to the 1-deoxy-D-xylulose 5-phosphate binding site. Residue E124 participates in NADPH binding. D148 provides a ligand contact to Mn(2+). 4 residues coordinate 1-deoxy-D-xylulose 5-phosphate: S149, E150, S174, and H197. E150 is a binding site for Mn(2+). G203 provides a ligand contact to NADPH. S210, N215, K216, and E219 together coordinate 1-deoxy-D-xylulose 5-phosphate. Mn(2+) is bound at residue E219.

It belongs to the DXR family. Mg(2+) serves as cofactor. Requires Mn(2+) as cofactor.

The enzyme catalyses 2-C-methyl-D-erythritol 4-phosphate + NADP(+) = 1-deoxy-D-xylulose 5-phosphate + NADPH + H(+). Its pathway is isoprenoid biosynthesis; isopentenyl diphosphate biosynthesis via DXP pathway; isopentenyl diphosphate from 1-deoxy-D-xylulose 5-phosphate: step 1/6. In terms of biological role, catalyzes the NADPH-dependent rearrangement and reduction of 1-deoxy-D-xylulose-5-phosphate (DXP) to 2-C-methyl-D-erythritol 4-phosphate (MEP). In Geobacter sulfurreducens (strain ATCC 51573 / DSM 12127 / PCA), this protein is 1-deoxy-D-xylulose 5-phosphate reductoisomerase.